A 231-amino-acid polypeptide reads, in one-letter code: Large ribosomal subunit protein uL1 (231 aa).

Belongs to the universal ribosomal protein uL1 family. As to quaternary structure, part of the 50S ribosomal subunit.

Binds directly to 23S rRNA. The L1 stalk is quite mobile in the ribosome, and is involved in E site tRNA release. Its function is as follows. Protein L1 is also a translational repressor protein, it controls the translation of the L11 operon by binding to its mRNA. The protein is Large ribosomal subunit protein uL1 of Ruthia magnifica subsp. Calyptogena magnifica.